A 1204-amino-acid chain; its full sequence is Exportin-5 (1204 aa).

A2 bears the N-acetylalanine mark. Positions 2-108 are necessary for interaction with Ran; the sequence is AMDQVNALCE…ANGTLNILEE (107 aa). N6-acetyllysine is present on K396. The interval 533–640 is necessary for interaction with ILF3; that stretch reads ELLQMVLNFD…KQLLSNELLL (108 aa). A pre-miRNA binding region spans residues 641–642; it reads TQ. A Phosphoserine modification is found at S826.

Belongs to the exportin family. In terms of assembly, component of a nuclear export receptor complex composed of XPO5, RAN, dsRNA-binding proteins and dsRNA. Found in a nuclear export complex with XPO5, RAN, EEF1A1, and aminoacylated tRNA. Found in a nuclear export complex with XPO5, RAN, ILF3 and dsRNA. Found in a nuclear export complex with XPO5, RAN and pre-miRNA. Found in a nuclear export complex with XPO5, RAN, ILF3 and minihelix VA1 dsRNA. Found in a nuclear export complex with XPO5, RAN, ILF3, ZNF346 and dsRNA. Interacts with EEF1A1, ILF3, NUP153, NUP214 and ZNF346. Interacts with RAN and cargo proteins in a GTP-dependent manner. Interacts with isoform 5 of ADAR/ADAR1 (via DRBM domains). Interacts with SMAD4; mediates nuclear export of SMAD4. Interacts with RAN (GTP-bound form). In terms of tissue distribution, expressed in heart, brain, placenta, lung, skeletal muscle, kidney and pancreas.

It is found in the nucleus. It localises to the cytoplasm. In terms of biological role, mediates the nuclear export of proteins bearing a double-stranded RNA binding domain (dsRBD) and double-stranded RNAs (cargos). XPO5 in the nucleus binds cooperatively to the RNA and to the GTPase Ran in its active GTP-bound form. Proteins containing dsRBDs can associate with this trimeric complex through the RNA. Docking of this complex to the nuclear pore complex (NPC) is mediated through binding to nucleoporins. Upon transit of a nuclear export complex into the cytoplasm, hydrolysis of Ran-GTP to Ran-GDP (induced by RANBP1 and RANGAP1, respectively) cause disassembly of the complex and release of the cargo from the export receptor. XPO5 then returns to the nuclear compartment by diffusion through the nuclear pore complex, to mediate another round of transport. The directionality of nuclear export is thought to be conferred by an asymmetric distribution of the GTP- and GDP-bound forms of Ran between the cytoplasm and nucleus. Overexpression may in some circumstances enhance RNA-mediated gene silencing (RNAi). Mediates nuclear export of isoform 5 of ADAR/ADAR1 in a RanGTP-dependent manner. Functionally, mediates the nuclear export of micro-RNA precursors, which form short hairpins. Also mediates the nuclear export of synthetic short hairpin RNAs used for RNA interference. In some circumstances can also mediate the nuclear export of deacylated and aminoacylated tRNAs. Specifically recognizes dsRNAs that lack a 5'-overhang in a sequence-independent manner, have only a short 3'-overhang, and that have a double-stranded length of at least 15 base-pairs. Binding is dependent on Ran-GTP. (Microbial infection) Mediates the nuclear export of adenovirus VA1 dsRNA. The sequence is that of Exportin-5 (XPO5) from Homo sapiens (Human).